The chain runs to 229 residues: NAD-dependent protein deacetylase (229 aa).

Positions methionine 1 to isoleucine 229 constitute a Deacetylase sirtuin-type domain. The NAD(+) site is built by alanine 20, arginine 32, glutamine 96, isoleucine 98, aspartate 99, histidine 114, threonine 181, serine 182, asparagine 205, and valine 223. 2 residues coordinate nicotinamide: isoleucine 98 and aspartate 99. Residue histidine 114 is the Proton acceptor of the active site.

This sequence belongs to the sirtuin family. Class U subfamily.

The protein resides in the cytoplasm. The catalysed reaction is N(6)-acetyl-L-lysyl-[protein] + NAD(+) + H2O = 2''-O-acetyl-ADP-D-ribose + nicotinamide + L-lysyl-[protein]. Its function is as follows. NAD-dependent protein deacetylase which modulates the activities of several enzymes which are inactive in their acetylated form. The protein is NAD-dependent protein deacetylase of Listeria monocytogenes serotype 4b (strain F2365).